The sequence spans 101 residues: NAD(P)H-quinone oxidoreductase subunit 4L, chloroplastic (101 aa).

The next 3 membrane-spanning stretches (helical) occupy residues 2-22 (ILEH…YGLI), 32-52 (MCLE…SDFF), and 61-81 (IFSI…PAIL).

Belongs to the complex I subunit 4L family. As to quaternary structure, NDH is composed of at least 16 different subunits, 5 of which are encoded in the nucleus.

It is found in the plastid. It localises to the chloroplast thylakoid membrane. It catalyses the reaction a plastoquinone + NADH + (n+1) H(+)(in) = a plastoquinol + NAD(+) + n H(+)(out). The enzyme catalyses a plastoquinone + NADPH + (n+1) H(+)(in) = a plastoquinol + NADP(+) + n H(+)(out). NDH shuttles electrons from NAD(P)H:plastoquinone, via FMN and iron-sulfur (Fe-S) centers, to quinones in the photosynthetic chain and possibly in a chloroplast respiratory chain. The immediate electron acceptor for the enzyme in this species is believed to be plastoquinone. Couples the redox reaction to proton translocation, and thus conserves the redox energy in a proton gradient. The sequence is that of NAD(P)H-quinone oxidoreductase subunit 4L, chloroplastic from Platanus occidentalis (Sycamore).